The chain runs to 617 residues: Pentatricopeptide repeat-containing protein At4g18520, chloroplastic (617 aa).

The transit peptide at 1–19 (MFSLSLIQPRLRISEIPVT) directs the protein to the chloroplast. PPR repeat units follow at residues 116 to 146 (VIYF…MPEK), 147 to 181 (NTVT…GIRF), 183 to 217 (NERM…GVGN), 222 to 247 (SSLV…MEEK), 248 to 282 (DVIS…WFLP), 283 to 317 (NEFT…MIKT), 318 to 348 (DVFV…MSNR), 349 to 383 (NTVT…HLIA), 384 to 418 (NNLT…SIEK), 419 to 449 (NVYI…LPSR), 450 to 484 (DVVS…GVEP), 485 to 519 (NPFT…HALS), 520 to 550 (NVFV…MPEK), and 551 to 585 (NLVS…GFEV).

Belongs to the PPR family. PCMP-A subfamily. In terms of assembly, interacts with MORF8/RIP1, MORF2/RIP2 and MORF9/RIP9. As to expression, expressed specifically in aerial greening tissues, such as cotyledons, rosette leaves, cauline leaves, stems, sepals, stamens, carpels and siliques.

The protein localises to the plastid. It is found in the chloroplast. In terms of biological role, required for proper chloroplast development. Involved in the regulation of plastid gene expression probably through regulation of plastid-encoded polymerase (PEP) dependent chloroplast transcription. Required for RNA editing of several chloroplastic transcripts, especially accD transcripts. Required for processing of the chloroplastic rpoA pre-mRNA. Required for the monocistronic rpoA transcript processing from the rpl23-rpl2-rps19-rpl22-rps3-rpl16-rpl14-rps8-rpl36-rps11-rpoA polycistron. Binds the intergenic sequence of rps11-rpoA for rpoA monocistronic RNA cleavage. This is Pentatricopeptide repeat-containing protein At4g18520, chloroplastic (PCMP-A2) from Arabidopsis thaliana (Mouse-ear cress).